The chain runs to 359 residues: N-acetyl-gamma-glutamyl-phosphate reductase (359 aa).

Residue Cys-162 is part of the active site.

Belongs to the NAGSA dehydrogenase family. Type 1 subfamily.

It localises to the cytoplasm. The enzyme catalyses N-acetyl-L-glutamate 5-semialdehyde + phosphate + NADP(+) = N-acetyl-L-glutamyl 5-phosphate + NADPH + H(+). It functions in the pathway amino-acid biosynthesis; L-arginine biosynthesis; N(2)-acetyl-L-ornithine from L-glutamate: step 3/4. Catalyzes the NADPH-dependent reduction of N-acetyl-5-glutamyl phosphate to yield N-acetyl-L-glutamate 5-semialdehyde. The sequence is that of N-acetyl-gamma-glutamyl-phosphate reductase from Prochlorococcus marinus (strain MIT 9211).